Here is a 169-residue protein sequence, read N- to C-terminus: Small ribosomal subunit protein uS5 (169 aa).

The S5 DRBM domain occupies 14-77; sequence MKEQVVDIRR…QAAKKNLLLV (64 aa).

It belongs to the universal ribosomal protein uS5 family. Part of the 30S ribosomal subunit. Contacts proteins S4 and S8.

Its function is as follows. With S4 and S12 plays an important role in translational accuracy. Located at the back of the 30S subunit body where it stabilizes the conformation of the head with respect to the body. This is Small ribosomal subunit protein uS5 from Alkaliphilus metalliredigens (strain QYMF).